We begin with the raw amino-acid sequence, 239 residues long: Dihydromethanopterin reductase (acceptor) (239 aa).

4Fe-4S ferredoxin-type domains follow at residues 144-175 (MPYNIDRKQCKHCETCPPRENCPHEAISEKNG) and 176-205 (VTDQIDLLKCKGCGICKELCPYNAIKGGPV). Positions 153, 156, 159, 165, 185, 188, 191, and 195 each coordinate [4Fe-4S] cluster.

Homodimer. The cofactor is [4Fe-4S] cluster.

The catalysed reaction is 5,6,7,8-tetrahydromethanopterin + A = 7,8-dihydromethanopterin + AH2. The protein operates within cofactor biosynthesis; 5,6,7,8-tetrahydromethanopterin biosynthesis. Involved in the biosynthesis of tetrahydromethanopterin, a coenzyme used in methanogenesis. Catalyzes the reduction of dihydromethanopterin (H(2)MPT) to tetrahydromethanopterin (H(4)MPT). Ferredoxin may serve as an electron donor. The protein is Dihydromethanopterin reductase (acceptor) of Methanosarcina mazei (strain ATCC BAA-159 / DSM 3647 / Goe1 / Go1 / JCM 11833 / OCM 88) (Methanosarcina frisia).